An 88-amino-acid chain; its full sequence is Phosphoribosyl-ATP pyrophosphatase (88 aa).

Belongs to the PRA-PH family.

Its subcellular location is the cytoplasm. It catalyses the reaction 1-(5-phospho-beta-D-ribosyl)-ATP + H2O = 1-(5-phospho-beta-D-ribosyl)-5'-AMP + diphosphate + H(+). It participates in amino-acid biosynthesis; L-histidine biosynthesis; L-histidine from 5-phospho-alpha-D-ribose 1-diphosphate: step 2/9. The protein is Phosphoribosyl-ATP pyrophosphatase of Cutibacterium acnes (strain DSM 16379 / KPA171202) (Propionibacterium acnes).